The sequence spans 146 residues: Hemoglobin subunit beta-1 (146 aa).

The 145-residue stretch at His-2–His-146 folds into the Globin domain. His-92 contributes to the heme b binding site.

The protein belongs to the globin family. As to quaternary structure, heterotetramer of two alpha chains and two beta chains. Red blood cells.

Involved in oxygen transport from the lung to the various peripheral tissues. This chain is Hemoglobin subunit beta-1, found in Saara hardwickii (Indian spiny-tailed lizard).